The chain runs to 802 residues: LPS-assembly protein LptD (802 aa).

Positions 1–29 (MARLFSLKPLVLALGFCFGTHCAAADAVA) are cleaved as a signal peptide.

This sequence belongs to the LptD family. Component of the lipopolysaccharide transport and assembly complex. Interacts with LptE and LptA.

The protein resides in the cell outer membrane. Its function is as follows. Together with LptE, is involved in the assembly of lipopolysaccharide (LPS) at the surface of the outer membrane. The chain is LPS-assembly protein LptD from Neisseria meningitidis serogroup A / serotype 4A (strain DSM 15465 / Z2491).